Here is a 142-residue protein sequence, read N- to C-terminus: Large ribosomal subunit protein uL13 (142 aa).

The protein belongs to the universal ribosomal protein uL13 family. Part of the 50S ribosomal subunit.

In terms of biological role, this protein is one of the early assembly proteins of the 50S ribosomal subunit, although it is not seen to bind rRNA by itself. It is important during the early stages of 50S assembly. The protein is Large ribosomal subunit protein uL13 of Ralstonia nicotianae (strain ATCC BAA-1114 / GMI1000) (Ralstonia solanacearum).